Here is a 155-residue protein sequence, read N- to C-terminus: SsrA-binding protein (155 aa).

Belongs to the SmpB family.

It is found in the cytoplasm. Its function is as follows. Required for rescue of stalled ribosomes mediated by trans-translation. Binds to transfer-messenger RNA (tmRNA), required for stable association of tmRNA with ribosomes. tmRNA and SmpB together mimic tRNA shape, replacing the anticodon stem-loop with SmpB. tmRNA is encoded by the ssrA gene; the 2 termini fold to resemble tRNA(Ala) and it encodes a 'tag peptide', a short internal open reading frame. During trans-translation Ala-aminoacylated tmRNA acts like a tRNA, entering the A-site of stalled ribosomes, displacing the stalled mRNA. The ribosome then switches to translate the ORF on the tmRNA; the nascent peptide is terminated with the 'tag peptide' encoded by the tmRNA and targeted for degradation. The ribosome is freed to recommence translation, which seems to be the essential function of trans-translation. This chain is SsrA-binding protein, found in Lawsonia intracellularis (strain PHE/MN1-00).